A 588-amino-acid polypeptide reads, in one-letter code: Autophagy-related protein 22-1 (588 aa).

A helical membrane pass occupies residues 35-55 (YGWAAEVFTVCAMGSFLPITL). N84 carries an N-linked (GlcNAc...) asparagine glycan. 3 helical membrane passes run 109–129 (TASF…ILII), 144–164 (LLVS…AVTP), and 168–188 (LLGG…FVLL). N255 is a glycosylation site (N-linked (GlcNAc...) asparagine). The next 8 helical transmembrane spans lie at 270 to 290 (GIGI…LVIV), 301 to 321 (LVLF…AFWL), 365 to 385 (ILLF…VSGT), 399 to 419 (AALG…AFSW), 434 to 454 (IIAC…GFIP), 471 to 493 (FPLG…SFFG), 507 to 527 (LYAI…GFIT), and 536 to 556 (AFFF…LVDA).

Belongs to the ATG22 family.

It localises to the vacuole membrane. Vacuolar effluxer which mediate the efflux of amino acids resulting from autophagic degradation. The release of autophagic amino acids allows the maintenance of protein synthesis and viability during nitrogen starvation. The polypeptide is Autophagy-related protein 22-1 (atg22-1) (Emericella nidulans (strain FGSC A4 / ATCC 38163 / CBS 112.46 / NRRL 194 / M139) (Aspergillus nidulans)).